Reading from the N-terminus, the 422-residue chain is Phosphoribosylamine--glycine ligase (422 aa).

The ATP-grasp domain occupies 107 to 312; sequence KEVMAAAGVR…LGQLLYAAGT (206 aa). 138-193 serves as a coordination point for ATP; sequence PPVGDLSWVVKDDRLAAGKGVVVTSDRDVARTHAAGLLEAGHPVLLESYLDGPEVS. Residues glutamate 282 and asparagine 284 each coordinate Mg(2+).

This sequence belongs to the GARS family. Mg(2+) is required as a cofactor. Mn(2+) serves as cofactor.

The enzyme catalyses 5-phospho-beta-D-ribosylamine + glycine + ATP = N(1)-(5-phospho-beta-D-ribosyl)glycinamide + ADP + phosphate + H(+). It functions in the pathway purine metabolism; IMP biosynthesis via de novo pathway; N(1)-(5-phospho-D-ribosyl)glycinamide from 5-phospho-alpha-D-ribose 1-diphosphate: step 2/2. The sequence is that of Phosphoribosylamine--glycine ligase from Mycobacterium leprae (strain TN).